The sequence spans 275 residues: 2,3,4,5-tetrahydropyridine-2,6-dicarboxylate N-succinyltransferase (275 aa).

It belongs to the transferase hexapeptide repeat family.

The protein resides in the cytoplasm. The enzyme catalyses (S)-2,3,4,5-tetrahydrodipicolinate + succinyl-CoA + H2O = (S)-2-succinylamino-6-oxoheptanedioate + CoA. It participates in amino-acid biosynthesis; L-lysine biosynthesis via DAP pathway; LL-2,6-diaminopimelate from (S)-tetrahydrodipicolinate (succinylase route): step 1/3. This chain is 2,3,4,5-tetrahydropyridine-2,6-dicarboxylate N-succinyltransferase, found in Ralstonia pickettii (strain 12J).